The chain runs to 224 residues: uncharacterized protein (224 aa).

The HTH gntR-type domain occupies 10-77 (TPYYLQFYNQ…DRNGFSITSL (68 aa)). The segment at residues 37–56 (ETQLAKSFGVSRSPIREAMR) is a DNA-binding region (H-T-H motif).

This is an uncharacterized protein from Bacillus subtilis (strain 168).